The sequence spans 284 residues: Bifunctional protein FolD (284 aa).

Residues 166 to 168 (GAS) and Ile232 each bind NADP(+).

It belongs to the tetrahydrofolate dehydrogenase/cyclohydrolase family. As to quaternary structure, homodimer.

It catalyses the reaction (6R)-5,10-methylene-5,6,7,8-tetrahydrofolate + NADP(+) = (6R)-5,10-methenyltetrahydrofolate + NADPH. The catalysed reaction is (6R)-5,10-methenyltetrahydrofolate + H2O = (6R)-10-formyltetrahydrofolate + H(+). It participates in one-carbon metabolism; tetrahydrofolate interconversion. In terms of biological role, catalyzes the oxidation of 5,10-methylenetetrahydrofolate to 5,10-methenyltetrahydrofolate and then the hydrolysis of 5,10-methenyltetrahydrofolate to 10-formyltetrahydrofolate. This Pseudomonas fluorescens (strain Pf0-1) protein is Bifunctional protein FolD.